The primary structure comprises 450 residues: Na(+)/H(+) antiporter NhaA (450 aa).

11 helical membrane-spanning segments follow: residues 24–44 (FFAIEASSGILLMAATVLALV), 75–95 (LILWINDGLMAIFFFVVGLEI), 111–131 (ALPIAAAIGGMLVPAGIYLAL), 140–160 (GWGVPMATDIAFALGILSLLG), 169–189 (VFLTAVAIVDDLGAILVIAFF), 196–216 (FSFLMLGFAAFAVMLLLNWLG), 224–244 (LLVGLVLWFALLKSGVHATIA), 318–338 (WVAWFIMPVFALANAGVTVSA), 352–372 (IFFGLLLGKQGGVTLAVWLLV), 390–410 (GIGWLAGIGFTMAIFIATLAF), and 422–442 (SILCASFVAGFGGYMLMRVLL).

This sequence belongs to the NhaA Na(+)/H(+) (TC 2.A.33) antiporter family.

It is found in the cell inner membrane. The catalysed reaction is Na(+)(in) + 2 H(+)(out) = Na(+)(out) + 2 H(+)(in). Na(+)/H(+) antiporter that extrudes sodium in exchange for external protons. The polypeptide is Na(+)/H(+) antiporter NhaA (Oleidesulfovibrio alaskensis (strain ATCC BAA-1058 / DSM 17464 / G20) (Desulfovibrio alaskensis)).